A 172-amino-acid polypeptide reads, in one-letter code: NADH-quinone oxidoreductase subunit B (172 aa).

Cys46, Cys47, Cys111, and Cys141 together coordinate [4Fe-4S] cluster.

The protein belongs to the complex I 20 kDa subunit family. NDH-1 is composed of 14 different subunits. Subunits NuoB, C, D, E, F, and G constitute the peripheral sector of the complex. The cofactor is [4Fe-4S] cluster.

It localises to the cell membrane. It carries out the reaction a quinone + NADH + 5 H(+)(in) = a quinol + NAD(+) + 4 H(+)(out). Functionally, NDH-1 shuttles electrons from NADH, via FMN and iron-sulfur (Fe-S) centers, to quinones in the respiratory chain. The immediate electron acceptor for the enzyme in this species is believed to be a menaquinone. Couples the redox reaction to proton translocation (for every two electrons transferred, four hydrogen ions are translocated across the cytoplasmic membrane), and thus conserves the redox energy in a proton gradient. The polypeptide is NADH-quinone oxidoreductase subunit B (Bacillus cytotoxicus (strain DSM 22905 / CIP 110041 / 391-98 / NVH 391-98)).